A 245-amino-acid chain; its full sequence is MVPWLGPDDPFPPVERALGATSGAPGLLAASGDLLPSRLIDAYRRGIFPWYSDGQPVLWWSPDPRMVLRPAEFKVAPSLRKTLRRVLREDAWEIRVDHDFASVMRACAQAPRRGQRGTWITADVVEAYSSLHRVGDAHSIETWFEGKRVGGLYGVSFGKMFFGESMFAEVTDASKMALAALVGHLRRHEIEMIDCQQNTSHLASLGGREITRKSFIAHVRASVEAPPIPWRFDKTALLEVVAPAS.

It belongs to the L/F-transferase family.

It localises to the cytoplasm. It catalyses the reaction N-terminal L-lysyl-[protein] + L-leucyl-tRNA(Leu) = N-terminal L-leucyl-L-lysyl-[protein] + tRNA(Leu) + H(+). It carries out the reaction N-terminal L-arginyl-[protein] + L-leucyl-tRNA(Leu) = N-terminal L-leucyl-L-arginyl-[protein] + tRNA(Leu) + H(+). The catalysed reaction is L-phenylalanyl-tRNA(Phe) + an N-terminal L-alpha-aminoacyl-[protein] = an N-terminal L-phenylalanyl-L-alpha-aminoacyl-[protein] + tRNA(Phe). Functionally, functions in the N-end rule pathway of protein degradation where it conjugates Leu, Phe and, less efficiently, Met from aminoacyl-tRNAs to the N-termini of proteins containing an N-terminal arginine or lysine. The sequence is that of Leucyl/phenylalanyl-tRNA--protein transferase from Paraburkholderia phytofirmans (strain DSM 17436 / LMG 22146 / PsJN) (Burkholderia phytofirmans).